Consider the following 1392-residue polypeptide: Leucine-rich PPR motif-containing protein, mitochondrial (1392 aa).

A mitochondrion-targeting transit peptide spans 1-77 (MSALLRPARW…LPEEPAPVRR (77 aa)). PPR repeat units follow at residues 125-159 (LLRS…GTVY), 160-194 (DVSH…NIQP), 195-229 (NRVT…DLPI), 230-264 (TEAV…GIEP), 265-299 (GPDT…DHYF), 300-334 (MDRD…RRSI), 402-436 (HSSS…GFPI), 437-471 (RTHY…GVDP), 677-708 (VGDP…ESDM), 709-745 (VIGG…SAVL), 746-783 (DTAK…IKDA), 784-820 (AVLS…AKPS), 821-856 (SNIS…VLPR), and 953-987 (RDQM…NLIP). Residues lysine 151 and lysine 186 each carry the N6-acetyllysine modification. Lysine 291 carries the post-translational modification N6-acetyllysine. Lysine 462 carries the post-translational modification N6-acetyllysine. Lysine 749 is subject to N6-acetyllysine. Serine 1025, serine 1026, and serine 1028 each carry phosphoserine. PPR repeat units lie at residues 1030–1064 (GDTV…DVVF), 1065–1101 (SSEA…GFTL), 1102–1136 (NGAA…EQVP), 1137–1173 (SELA…IELS), 1174–1208 (RMVF…ENQT), and 1315–1349 (NDRV…NMKL). Serine 1137 is modified (phosphoserine).

Component of mRNP complexes associated with HNRPA1. Component of the complex, at least composed of LRPPRC, BECN1 and BCL2; the interactions prevent BECN1 from forming an autophagy-inducing complex with PIK3C3. Interacts with CECR2, HEBP2, MAP1S, UXT, PPARGC1A and FOXO1. Interacts (via N-terminus) with EIF4E; the interaction promotes association of EIF4E with 4ESE-containing mRNAs. Interacts with exportin XPO1/CRM1; interacts both alone and in complex with EIF4E and 4ESE-containing mRNAs to form an EIF4E-dependent mRNA export complex. Interacts with importin IPO8; the interaction occurs when LRPPRC is in its RNA-free form and returns LRPPRC to the nucleus for further export rounds. Interacts with BECN1. Widely expressed. Expressed in liver, brain and a subset of small diameter sensory neurons in the dorsal root ganglion (at protein level).

It is found in the mitochondrion. The protein localises to the nucleus. The protein resides in the nucleoplasm. It localises to the nucleus inner membrane. Its subcellular location is the nucleus outer membrane. In terms of biological role, may play a role in RNA metabolism in both nuclei and mitochondria. In the nucleus binds to HNRPA1-associated poly(A) mRNAs and is part of nmRNP complexes at late stages of mRNA maturation which are possibly associated with nuclear mRNA export. Positively modulates nuclear export of mRNAs containing the EIF4E sensitivity element (4ESE) by binding simultaneously to both EIF4E and the 4ESE and acting as a platform for assembly for the RNA export complex. Also binds to exportin XPO1/CRM1 to engage the nuclear pore and traffic the bound mRNAs to the cytoplasm. May bind mature mRNA in the nucleus outer membrane. In mitochondria binds to poly(A) mRNA. Plays a role in translation or stability of mitochondrially encoded cytochrome c oxidase (COX) subunits. May be involved in transcription regulation. Cooperates with PPARGC1A to regulate certain mitochondrially encoded genes and gluconeogenic genes and may regulate docking of PPARGC1A to transcription factors. Seems to be involved in the transcription regulation of the multidrug-related genes MDR1 and MVP. Part of a nuclear factor that binds to the invMED1 element of MDR1 and MVP gene promoters. Binds single-stranded DNA. Required for maintaining mitochondrial potential. Suppresses the initiation of basal levels of autophagy and mitophagy by sustaining BCL2 levels. In Rattus norvegicus (Rat), this protein is Leucine-rich PPR motif-containing protein, mitochondrial (Lrpprc).